We begin with the raw amino-acid sequence, 45 residues long: Myotoxin-3 (45 aa).

Cystine bridges form between Cys-4–Cys-36, Cys-11–Cys-30, and Cys-18–Cys-37.

Monomer. As to expression, expressed by the venom gland.

The protein resides in the secreted. Cationic peptide that possesses multiple functions. It acts as a cell-penetrating peptide (CPP), and as a potent voltage-gated potassium channel (Kv) inhibitor. It exhibits antimicrobial activities, hind limb paralysis, and severe muscle necrosis by a non-enzymatic mechanism. This Crotalus viridis viridis (Prairie rattlesnake) protein is Myotoxin-3.